Reading from the N-terminus, the 38-residue chain is Spheniscin-2 (38 aa).

3 disulfides stabilise this stretch: Cys5/Cys33, Cys12/Cys27, and Cys17/Cys34.

As to quaternary structure, monomer. In terms of tissue distribution, secreted into the stomach cavity.

It localises to the secreted. Its function is as follows. Has antifungal activity and antibacterial activity against Gram-positive and Gram-negative bacteria. Involved in the process of food preservation in the stomach during the incubation fast. May also be present during infection. The chain is Spheniscin-2 from Aptenodytes patagonicus (King penguin).